The following is a 452-amino-acid chain: uncharacterized protein (452 aa).

Position 72–79 (Gly-72–Thr-79) interacts with ATP.

Belongs to the AAA ATPase family. RarA/MGS1/WRNIP1 subfamily.

This is an uncharacterized protein from Mycobacterium tuberculosis (strain ATCC 25618 / H37Rv).